A 461-amino-acid polypeptide reads, in one-letter code: Ufm1-specific protease 2 (461 aa).

Residues Cys294, Asp418, and His420 contribute to the active site.

It belongs to the peptidase C78 family. In terms of tissue distribution, expressed at high level in brain, kidney, stomach, skeletal muscle, liver, pancreas, spleen and testis.

It localises to the endoplasmic reticulum. The protein resides in the cytoplasm. Its subcellular location is the nucleus. Thiol-dependent isopeptidase that specifically cleaves UFM1, a ubiquitin-like modifier protein, from conjugated proteins, such as CD274/PD-L1, CYB5R3, DDRGK1, MRE11, RPL26/uL24, TRIP4 and RPL26/uL24. While it is also able to mediate the processing of UFM1 precursors, a prerequisite for conjugation reactions, UFSP2 mainly acts as a protein deUFMylase that mediates deconjugation of UFM1 from target proteins. Mediates deUFMylation of RPL26/uL24, a critical step to release the UFM1 ribosome E3 ligase (UREL) complex during the recycling of 60S ribosome subunits from the endoplasmic reticulum. Catalyzes deUFMylation of TRIP4, regulating intracellular nuclear receptors transactivation and thereby regulate cell proliferation and differentiation. In Mus musculus (Mouse), this protein is Ufm1-specific protease 2.